The sequence spans 341 residues: UDP-3-O-(3-hydroxymyristoyl)glucosamine N-acyltransferase (341 aa).

The active-site Proton acceptor is His239.

The protein belongs to the transferase hexapeptide repeat family. LpxD subfamily. Homotrimer.

The catalysed reaction is a UDP-3-O-[(3R)-3-hydroxyacyl]-alpha-D-glucosamine + a (3R)-hydroxyacyl-[ACP] = a UDP-2-N,3-O-bis[(3R)-3-hydroxyacyl]-alpha-D-glucosamine + holo-[ACP] + H(+). The enzyme catalyses UDP-3-O-[(3R)-3-hydroxytetradecanoyl]-alpha-D-glucosamine + (3R)-hydroxytetradecanoyl-[ACP] = UDP-2-N,3-O-bis[(3R)-3-hydroxytetradecanoyl]-alpha-D-glucosamine + holo-[ACP] + H(+). It participates in glycolipid biosynthesis; lipid IV(A) biosynthesis; lipid IV(A) from (3R)-3-hydroxytetradecanoyl-[acyl-carrier-protein] and UDP-N-acetyl-alpha-D-glucosamine: step 3/6. Its function is as follows. Catalyzes the N-acylation of UDP-3-O-(hydroxytetradecanoyl)glucosamine using 3-hydroxytetradecanoyl-ACP as the acyl donor. Is involved in the biosynthesis of lipid A, a phosphorylated glycolipid that anchors the lipopolysaccharide to the outer membrane of the cell. The polypeptide is UDP-3-O-(3-hydroxymyristoyl)glucosamine N-acyltransferase (Salmonella paratyphi A (strain ATCC 9150 / SARB42)).